A 197-amino-acid chain; its full sequence is Carbohydrate-binding domain-containing protein C2E1P3.05c (197 aa).

The N-terminal stretch at 1–23 (MLTQSLFLTVLTLALSLVSKTSA) is a signal peptide. 2 CBM1 domains span residues 25-61 (QCSPRYGTCGGIYYDGPTCCVVGSSCIYSNPWYSQCI) and 68-104 (PCAKLYQQCGGINYNGPTCCEPGSECIYNGPYYSQCI). Intrachain disulfides connect C33–C50, C44–C60, C76–C93, and C87–C103. The segment at 115–163 (SSAASSTTSTTSSSSLVSSTTLTSSSPSAVSSTTSIPSISSTISSSVST) is disordered. Residues N182 and N193 are each glycosylated (N-linked (GlcNAc...) asparagine).

It localises to the secreted. The chain is Carbohydrate-binding domain-containing protein C2E1P3.05c from Schizosaccharomyces pombe (strain 972 / ATCC 24843) (Fission yeast).